A 328-amino-acid chain; its full sequence is Tetraacyldisaccharide 4'-kinase (328 aa).

55-62 lines the ATP pocket; it reads TAGGNGKT.

This sequence belongs to the LpxK family.

The catalysed reaction is a lipid A disaccharide + ATP = a lipid IVA + ADP + H(+). Its pathway is glycolipid biosynthesis; lipid IV(A) biosynthesis; lipid IV(A) from (3R)-3-hydroxytetradecanoyl-[acyl-carrier-protein] and UDP-N-acetyl-alpha-D-glucosamine: step 6/6. Its function is as follows. Transfers the gamma-phosphate of ATP to the 4'-position of a tetraacyldisaccharide 1-phosphate intermediate (termed DS-1-P) to form tetraacyldisaccharide 1,4'-bis-phosphate (lipid IVA). The protein is Tetraacyldisaccharide 4'-kinase of Yersinia enterocolitica serotype O:8 / biotype 1B (strain NCTC 13174 / 8081).